The sequence spans 450 residues: Exodeoxyribonuclease 7 large subunit (450 aa).

The protein belongs to the XseA family. As to quaternary structure, heterooligomer composed of large and small subunits.

The protein localises to the cytoplasm. The catalysed reaction is Exonucleolytic cleavage in either 5'- to 3'- or 3'- to 5'-direction to yield nucleoside 5'-phosphates.. Its function is as follows. Bidirectionally degrades single-stranded DNA into large acid-insoluble oligonucleotides, which are then degraded further into small acid-soluble oligonucleotides. The chain is Exodeoxyribonuclease 7 large subunit from Listeria welshimeri serovar 6b (strain ATCC 35897 / DSM 20650 / CCUG 15529 / CIP 8149 / NCTC 11857 / SLCC 5334 / V8).